A 192-amino-acid polypeptide reads, in one-letter code: Ribosomal RNA small subunit methyltransferase G (192 aa).

Residues Gly-63, Leu-68, 112 to 113, and Arg-125 contribute to the S-adenosyl-L-methionine site; that span reads IE.

The protein belongs to the methyltransferase superfamily. RNA methyltransferase RsmG family.

It is found in the cytoplasm. The catalysed reaction is guanosine(527) in 16S rRNA + S-adenosyl-L-methionine = N(7)-methylguanosine(527) in 16S rRNA + S-adenosyl-L-homocysteine. Functionally, specifically methylates the N7 position of guanine in position 527 of 16S rRNA. The polypeptide is Ribosomal RNA small subunit methyltransferase G (Rickettsia rickettsii (strain Iowa)).